Here is a 119-residue protein sequence, read N- to C-terminus: Large ribosomal subunit protein bL20 (119 aa).

This sequence belongs to the bacterial ribosomal protein bL20 family.

Functionally, binds directly to 23S ribosomal RNA and is necessary for the in vitro assembly process of the 50S ribosomal subunit. It is not involved in the protein synthesizing functions of that subunit. The sequence is that of Large ribosomal subunit protein bL20 from Mycoplasma capricolum subsp. capricolum (strain California kid / ATCC 27343 / NCTC 10154).